The following is a 634-amino-acid chain: DNA-directed RNA polymerase subunit gamma (634 aa).

Positions 74, 76, 89, and 92 each coordinate Zn(2+). Mg(2+) contacts are provided by aspartate 471, aspartate 473, and aspartate 475.

It belongs to the RNA polymerase beta' chain family. RpoC1 subfamily. As to quaternary structure, in cyanobacteria the RNAP catalytic core is composed of 2 alpha, 1 beta, 1 beta', 1 gamma and 1 omega subunit. When a sigma factor is associated with the core the holoenzyme is formed, which can initiate transcription. Mg(2+) is required as a cofactor. Zn(2+) serves as cofactor.

The catalysed reaction is RNA(n) + a ribonucleoside 5'-triphosphate = RNA(n+1) + diphosphate. DNA-dependent RNA polymerase catalyzes the transcription of DNA into RNA using the four ribonucleoside triphosphates as substrates. The protein is DNA-directed RNA polymerase subunit gamma of Synechococcus sp. (strain RCC307).